The primary structure comprises 80 residues: Translation initiation factor IF-1, chloroplastic (80 aa).

In terms of domain architecture, S1-like spans 1–72; it reads MKKQNLIDME…TKGRIIYRLR (72 aa).

Belongs to the IF-1 family. Component of the 30S ribosomal translation pre-initiation complex which assembles on the 30S ribosome in the order IF-2 and IF-3, IF-1 and N-formylmethionyl-tRNA(fMet); mRNA recruitment can occur at any time during PIC assembly.

The protein resides in the plastid. The protein localises to the chloroplast. One of the essential components for the initiation of protein synthesis. Stabilizes the binding of IF-2 and IF-3 on the 30S subunit to which N-formylmethionyl-tRNA(fMet) subsequently binds. Helps modulate mRNA selection, yielding the 30S pre-initiation complex (PIC). Upon addition of the 50S ribosomal subunit IF-1, IF-2 and IF-3 are released leaving the mature 70S translation initiation complex. The polypeptide is Translation initiation factor IF-1, chloroplastic (Adiantum capillus-veneris (Maidenhair fern)).